A 199-amino-acid polypeptide reads, in one-letter code: Imidazole glycerol phosphate synthase subunit HisH (199 aa).

Residues 1–199 (MTVVVDYEMG…QILKNLREML (199 aa)) enclose the Glutamine amidotransferase type-1 domain. Cys-79 serves as the catalytic Nucleophile. Catalysis depends on residues His-180 and Glu-182.

Heterodimer of HisH and HisF.

The protein localises to the cytoplasm. It carries out the reaction 5-[(5-phospho-1-deoxy-D-ribulos-1-ylimino)methylamino]-1-(5-phospho-beta-D-ribosyl)imidazole-4-carboxamide + L-glutamine = D-erythro-1-(imidazol-4-yl)glycerol 3-phosphate + 5-amino-1-(5-phospho-beta-D-ribosyl)imidazole-4-carboxamide + L-glutamate + H(+). The enzyme catalyses L-glutamine + H2O = L-glutamate + NH4(+). The protein operates within amino-acid biosynthesis; L-histidine biosynthesis; L-histidine from 5-phospho-alpha-D-ribose 1-diphosphate: step 5/9. In terms of biological role, IGPS catalyzes the conversion of PRFAR and glutamine to IGP, AICAR and glutamate. The HisH subunit catalyzes the hydrolysis of glutamine to glutamate and ammonia as part of the synthesis of IGP and AICAR. The resulting ammonia molecule is channeled to the active site of HisF. The polypeptide is Imidazole glycerol phosphate synthase subunit HisH (Carboxydothermus hydrogenoformans (strain ATCC BAA-161 / DSM 6008 / Z-2901)).